Reading from the N-terminus, the 232-residue chain is Large ribosomal subunit protein uL1 (232 aa).

The protein belongs to the universal ribosomal protein uL1 family. In terms of assembly, part of the 50S ribosomal subunit.

Its function is as follows. Binds directly to 23S rRNA. The L1 stalk is quite mobile in the ribosome, and is involved in E site tRNA release. In terms of biological role, protein L1 is also a translational repressor protein, it controls the translation of the L11 operon by binding to its mRNA. The protein is Large ribosomal subunit protein uL1 of Xanthobacter autotrophicus (strain ATCC BAA-1158 / Py2).